Here is an 819-residue protein sequence, read N- to C-terminus: LPS-assembly protein LptD (819 aa).

The N-terminal stretch at 1–33 (MRQMKYQFKFNPLAAAIFTLLCGGSMQSSYADA) is a signal peptide.

The protein belongs to the LptD family. Component of the lipopolysaccharide transport and assembly complex. Interacts with LptE and LptA.

The protein resides in the cell outer membrane. In terms of biological role, together with LptE, is involved in the assembly of lipopolysaccharide (LPS) at the surface of the outer membrane. This chain is LPS-assembly protein LptD, found in Acinetobacter baylyi (strain ATCC 33305 / BD413 / ADP1).